The sequence spans 403 residues: Dynactin subunit 2-A (403 aa).

The tract at residues 1-26 (MADPKYADLPGIARNEPDVYETSDLP) is disordered. Residues 99 to 132 (PQQKYQRLLHEVQELTQEVEKTQSTVKESAAEEK) adopt a coiled-coil conformation. The interval 183–203 (AAKTRKNPEGKSPAKGPGPDT) is disordered. Positions 381–401 (KENLATVEDNFSNIDGRIKKL) form a coiled coil.

Belongs to the dynactin subunit 2 family. In terms of assembly, subunit of dynactin, a multiprotein complex part of a tripartite complex with dynein and a adapter, such as BICDL1, BICD2 or HOOK3. The dynactin complex is built around ACTR1A/ACTB filament and consists of an actin-related filament composed of a shoulder domain, a pointed end and a barbed end. Its length is defined by its flexible shoulder domain. The soulder is composed of 2 DCTN1 subunits, 4 DCTN2 and 2 DCTN3.

The protein resides in the cytoplasm. It is found in the cytoskeleton. Its subcellular location is the microtubule organizing center. The protein localises to the centrosome. It localises to the membrane. Part of the dynactin complex that activates the molecular motor dynein for ultra-processive transport along microtubules. In the dynactin soulder domain, binds the ACTR1A filament and acts as a molecular ruler to determine the length. Modulates cytoplasmic dynein binding to an organelle, and plays a role in prometaphase chromosome alignment and spindle organization during mitosis. Involved in anchoring microtubules to centrosomes. The protein is Dynactin subunit 2-A (dctn2-a) of Xenopus laevis (African clawed frog).